The chain runs to 309 residues: Aspartate carbamoyltransferase catalytic subunit (309 aa).

The carbamoyl phosphate site is built by arginine 55 and threonine 56. Position 85 (lysine 85) interacts with L-aspartate. Residues arginine 106, histidine 135, and glutamine 138 each coordinate carbamoyl phosphate. L-aspartate contacts are provided by arginine 168 and arginine 230. Carbamoyl phosphate contacts are provided by leucine 268 and proline 269.

The protein belongs to the aspartate/ornithine carbamoyltransferase superfamily. ATCase family. As to quaternary structure, heterododecamer (2C3:3R2) of six catalytic PyrB chains organized as two trimers (C3), and six regulatory PyrI chains organized as three dimers (R2).

The enzyme catalyses carbamoyl phosphate + L-aspartate = N-carbamoyl-L-aspartate + phosphate + H(+). The protein operates within pyrimidine metabolism; UMP biosynthesis via de novo pathway; (S)-dihydroorotate from bicarbonate: step 2/3. Its function is as follows. Catalyzes the condensation of carbamoyl phosphate and aspartate to form carbamoyl aspartate and inorganic phosphate, the committed step in the de novo pyrimidine nucleotide biosynthesis pathway. This is Aspartate carbamoyltransferase catalytic subunit from Vibrio cholerae serotype O1 (strain ATCC 39541 / Classical Ogawa 395 / O395).